An 821-amino-acid polypeptide reads, in one-letter code: Fibroblast growth factor receptor 2 (821 aa).

The N-terminal stretch at 1 to 21 (MVSWGRFICLVVVTMATLSLA) is a signal peptide. Topologically, residues 22–377 (RPSFSLVEDT…EITASPDYLE (356 aa)) are extracellular. One can recognise an Ig-like C2-type 1 domain in the interval 25 to 125 (FSLVEDTTLE…ETWYFMVNVT (101 aa)). A disulfide bridge connects residues C62 and C107. N83 and N123 each carry an N-linked (GlcNAc...) asparagine glycan. The segment covering 131-144 (GDDEDDTDGAEDFV) has biased composition (acidic residues). Residues 131–151 (GDDEDDTDGAEDFVSENSNNK) form a disordered region. 2 Ig-like C2-type domains span residues 154 to 247 (PYWT…YHLD) and 256 to 358 (PILQ…AWLT). Residues 161–178 (KMEKRLHAVPAANTVKFR) form a heparin-binding region. C179 and C231 are oxidised to a cystine. Residues N228, N241, N265, N297, N318, and N331 are each glycosylated (N-linked (GlcNAc...) asparagine). C278 and C342 are disulfide-bonded. Residues 378-398 (IAIYCIGVFLIACMVVTVILC) traverse the membrane as a helical segment. Residues 399–821 (RMKNTTKKPD…YPHINGSVKT (423 aa)) lie on the Cytoplasmic side of the membrane. Residue Y466 is modified to Phosphotyrosine; by autocatalysis. The region spanning 481 to 770 (LTLGKPLGEG…LTLTTNEEYL (290 aa)) is the Protein kinase domain. Residues 487 to 495 (LGEGCFGQV), K517, 565 to 567 (EYA), and N571 each bind ATP. Y586 and Y588 each carry phosphotyrosine; by autocatalysis. Catalysis depends on D626, which acts as the Proton acceptor. Phosphotyrosine; by autocatalysis occurs at positions 656, 657, and 769. Position 780 is a phosphoserine (S780).

The protein belongs to the protein kinase superfamily. Tyr protein kinase family. Fibroblast growth factor receptor subfamily. In terms of assembly, monomer. Homodimer after ligand binding. Interacts predominantly with FGF1 and FGF2, but can also interact with FGF3, FGF4, FGF6, FGF7, FGF8, FGF9, FGF10, FGF17, FGF18 and FGF22 (in vitro). Ligand specificity is determined by tissue-specific expression of isoforms, and differences in the third Ig-like domain are crucial for ligand specificity. Isoform 1 has high affinity for FGF1 and FGF2, but low affinity for FGF7. Isoform 3 has high affinity for FGF1 and FGF7, and has much higher affinity for FGF7 than isoform 1 (in vitro). Affinity for fibroblast growth factors (FGFs) is increased by heparan sulfate glycosaminoglycans that function as coreceptors. Likewise, KLB increases the affinity for FGF19 and FGF21. Interacts with PLCG1, GRB2 and PAK4. Interacts with FLRT2. In terms of processing, autophosphorylated. Binding of FGF family members together with heparan sulfate proteoglycan or heparin promotes receptor dimerization and autophosphorylation on several tyrosine residues. Autophosphorylation occurs in trans between the two FGFR molecules present in the dimer. Phosphorylation at Tyr-769 is essential for interaction with PLCG1. Post-translationally, N-glycosylated in the endoplasmic reticulum. The N-glycan chains undergo further maturation to an Endo H-resistant form in the Golgi apparatus. Ubiquitinated. FGFR2 is rapidly ubiquitinated after autophosphorylation, leading to internalization and degradation. Subject to degradation both in lysosomes and by the proteasome.

The protein localises to the cell membrane. The protein resides in the golgi apparatus. Its subcellular location is the cytoplasmic vesicle. It localises to the secreted. It catalyses the reaction L-tyrosyl-[protein] + ATP = O-phospho-L-tyrosyl-[protein] + ADP + H(+). With respect to regulation, present in an inactive conformation in the absence of bound ligand. Ligand binding leads to dimerization and activation by autophosphorylation on tyrosine residues. Inhibited by ARQ 523 and ARQ 069; these compounds maintain the kinase in an inactive conformation and inhibit autophosphorylation. Functionally, tyrosine-protein kinase that acts as a cell-surface receptor for fibroblast growth factors and plays an essential role in the regulation of cell proliferation, differentiation, migration and apoptosis, and in the regulation of embryonic development. Required for normal embryonic patterning, trophoblast function, limb bud development, lung morphogenesis, osteogenesis and skin development. Plays an essential role in the regulation of osteoblast differentiation, proliferation and apoptosis, and is required for normal skeleton development. Promotes cell proliferation in keratinocytes and immature osteoblasts, but promotes apoptosis in differentiated osteoblasts. Phosphorylates PLCG1, FRS2 and PAK4. Ligand binding leads to the activation of several signaling cascades. Activation of PLCG1 leads to the production of the cellular signaling molecules diacylglycerol and inositol 1,4,5-trisphosphate. Phosphorylation of FRS2 triggers recruitment of GRB2, GAB1, PIK3R1 and SOS1, and mediates activation of RAS, MAPK1/ERK2, MAPK3/ERK1 and the MAP kinase signaling pathway, as well as of the AKT1 signaling pathway. FGFR2 signaling is down-regulated by ubiquitination, internalization and degradation. Mutations that lead to constitutive kinase activation or impair normal FGFR2 maturation, internalization and degradation lead to aberrant signaling. Over-expressed FGFR2 promotes activation of STAT1. The chain is Fibroblast growth factor receptor 2 (FGFR2) from Homo sapiens (Human).